The sequence spans 780 residues: Vacuolar protein sorting-associated protein 51 homolog (780 aa).

A2 is modified (N-acetylalanine). Disordered stretches follow at residues 270–292 (STLVEDDDSSNDTESNDQHPAKI) and 615–651 (QGTFRKHKRTDSNGSNTTTSSRSNTLHNDKMARSNSQ). A compositionally biased stretch (acidic residues) spans 273–284 (VEDDDSSNDTES). A compositionally biased stretch (low complexity) spans 626–639 (SNGSNTTTSSRSNT).

This sequence belongs to the VPS51 family. In terms of assembly, component of the Golgi-associated retrograde protein (GARP) complex, composed by VPS51, VPS52, VPS53 and VPS54. Component of the endosome-associated retrograde protein (EARP) complex, composed of VPS51, VPS52, VPS53 and VPS50. Interacts with VPS52. Expressed in primary and lateral roots, shoots of seedlings and flowers.

It is found in the golgi apparatus. The protein resides in the trans-Golgi network. The protein localises to the recycling endosome. Its subcellular location is the prevacuolar compartment. Functionally, acts as a component of the GARP complex that is involved in retrograde transport from early and late endosomes to the trans-Golgi network (TGN). The GARP complex is required for the maintenance of protein retrieval from endosomes to the TGN, acid hydrolase sorting, lysosome function, endosomal cholesterol traffic and autophagy. VPS51 participates in retrograde transport of acid hydrolase receptors, likely by promoting tethering and SNARE-dependent fusion of endosome-derived carriers to the TGN. Acts as a component of the EARP complex that is involved in endocytic recycling. The EARP complex associates with Rab4-positive endosomes and promotes recycling of internalized transferrin receptor (TFRC) to the plasma membrane. Required for vacuolar targeting and cellular trafficking. Involved in the regulation of vascular tissue patterning, probably by regulating PIN1 expression pattern, thus modulating auxin flux. Important to prevent PIN1 accumulation within margin cells, possibly by targeting PIN1 to the lytic vacuole. Regulates PIN1 and ATHB8 expression pattern in secondary veins. The sequence is that of Vacuolar protein sorting-associated protein 51 homolog from Arabidopsis thaliana (Mouse-ear cress).